The primary structure comprises 338 residues: Methionine import ATP-binding protein MetN 2 (338 aa).

An ABC transporter domain is found at 2-242 (IEIEKVCVDF…PQHAFTQQLV (241 aa)). An ATP-binding site is contributed by 39-46 (GTSGAGKS).

It belongs to the ABC transporter superfamily. Methionine importer (TC 3.A.1.24) family. As to quaternary structure, the complex is composed of two ATP-binding proteins (MetN), two transmembrane proteins (MetI) and a solute-binding protein (MetQ).

It is found in the cell inner membrane. The catalysed reaction is L-methionine(out) + ATP + H2O = L-methionine(in) + ADP + phosphate + H(+). It carries out the reaction D-methionine(out) + ATP + H2O = D-methionine(in) + ADP + phosphate + H(+). Functionally, part of the ABC transporter complex MetNIQ involved in methionine import. Responsible for energy coupling to the transport system. In Salmonella typhi, this protein is Methionine import ATP-binding protein MetN 2.